Here is a 342-residue protein sequence, read N- to C-terminus: Farnesyl pyrophosphate synthase 1 (342 aa).

Residues Lys48, Arg51, and Gln86 each coordinate isopentenyl diphosphate. Residues Asp93 and Asp97 each coordinate Mg(2+). Residue Arg102 participates in dimethylallyl diphosphate binding. Residue Arg103 coordinates isopentenyl diphosphate. Positions 190, 191, 229, 246, and 255 each coordinate dimethylallyl diphosphate.

The protein belongs to the FPP/GGPP synthase family. Requires Mg(2+) as cofactor.

It localises to the cytoplasm. The enzyme catalyses isopentenyl diphosphate + dimethylallyl diphosphate = (2E)-geranyl diphosphate + diphosphate. The catalysed reaction is isopentenyl diphosphate + (2E)-geranyl diphosphate = (2E,6E)-farnesyl diphosphate + diphosphate. Its pathway is isoprenoid biosynthesis; farnesyl diphosphate biosynthesis; farnesyl diphosphate from geranyl diphosphate and isopentenyl diphosphate: step 1/1. It functions in the pathway isoprenoid biosynthesis; geranyl diphosphate biosynthesis; geranyl diphosphate from dimethylallyl diphosphate and isopentenyl diphosphate: step 1/1. Functionally, catalyzes the sequential condensation of isopentenyl pyrophosphate with the allylic pyrophosphates, dimethylallyl pyrophosphate, and then with the resultant geranylpyrophosphate to the ultimate product farnesyl pyrophosphate. This is Farnesyl pyrophosphate synthase 1 (FPS1) from Parthenium argentatum (Guayule rubber plant).